A 335-amino-acid chain; its full sequence is Phospho-N-acetylmuramoyl-pentapeptide-transferase (335 aa).

A run of 10 helical transmembrane segments spans residues Leu3–Ile23, Gly53–Phe73, Ser78–Leu98, Phe118–Ile138, Val143–Val163, Gly174–Ala194, Phe200–Asn220, Ile226–Ala246, Trp251–Val271, and Val314–Tyr334.

The protein belongs to the glycosyltransferase 4 family. MraY subfamily. Requires Mg(2+) as cofactor.

Its subcellular location is the cell membrane. The enzyme catalyses UDP-N-acetyl-alpha-D-muramoyl-L-alanyl-gamma-D-glutamyl-L-lysyl-D-alanyl-D-alanine + di-trans,octa-cis-undecaprenyl phosphate = Mur2Ac(oyl-L-Ala-gamma-D-Glu-L-Lys-D-Ala-D-Ala)-di-trans,octa-cis-undecaprenyl diphosphate + UMP. It participates in cell wall biogenesis; peptidoglycan biosynthesis. Catalyzes the initial step of the lipid cycle reactions in the biosynthesis of the cell wall peptidoglycan: transfers peptidoglycan precursor phospho-MurNAc-pentapeptide from UDP-MurNAc-pentapeptide onto the lipid carrier undecaprenyl phosphate, yielding undecaprenyl-pyrophosphoryl-MurNAc-pentapeptide, known as lipid I. The chain is Phospho-N-acetylmuramoyl-pentapeptide-transferase from Streptococcus equi subsp. equi (strain 4047).